We begin with the raw amino-acid sequence, 162 residues long: Caveolin-2 (162 aa).

Topologically, residues 1–86 (MGLETEKADV…FEISKYVIYK (86 aa)) are cytoplasmic. Y19 is modified (phosphotyrosine; by SRC). A phosphoserine mark is found at S20 and S23. Y27 is modified (phosphotyrosine; by SRC). S36 carries the post-translational modification Phosphoserine. The segment at residues 87-107 (FLTVFLAIPLAFIAGILFATL) is an intramembrane region (helical). Over 108–162 (SCLHIWILMPFVKTCLMVLPSVQTIWKSVTDVVIGPLCTSVGRIFSSVSMQLSHD) the chain is Cytoplasmic.

It belongs to the caveolin family. Monomer or homodimer. Interacts with CAV1; the interaction forms a stable heterooligomeric complex that is required for targeting to lipid rafts and for caveolae formation. Tyrosine phosphorylated forms do not form heterooligomers with the Tyr-19-phosphorylated form existing as a monomer or dimer and the Tyr-27-form as a monomer only. Interacts (tyrosine phosphorylated form) with the SH2 domain-containing proteins, RASA1, NCK1 and SRC. Interacts (tyrosine phosphorylated form) with INSR; the interaction (Tyr-27-phosphorylated form) is increased on insulin stimulation. Interacts (Tyr-19-phosphorylated form) with MAPK1 (phosphorylated form); the interaction, promoted by insulin, leads to nuclear location and MAPK1 activation. Interacts with STAT3; the interaction is increased on insulin-induced tyrosine phosphorylation leading to STAT activation. Phosphorylated on serine and tyrosine residues. CAV1 promotes phosphorylation on Ser-23 which targets the complex to the plasma membrane, lipid rafts and caveolae. Phosphorylation on Ser-36 appears to modulate mitosis in endothelial cells. Phosphorylation on both Tyr-19 and Tyr-27 is required for insulin-induced 'Ser-727' phosphorylation of STAT3 and its activation. Phosphorylation on Tyr-19 is required for insulin-induced phosphorylation of MAPK1 and DNA binding of STAT3. Tyrosine phosphorylation is induced by both EGF and insulin. In the retina, mainly expressed in vessels, but also diffuse expression in the inner and outer plexiform layers and in the inner nuclear layer.

Its subcellular location is the nucleus. It localises to the cytoplasm. It is found in the golgi apparatus membrane. The protein localises to the cell membrane. The protein resides in the membrane. Its subcellular location is the caveola. May act as a scaffolding protein within caveolar membranes. Interacts directly with G-protein alpha subunits and can functionally regulate their activity. Acts as an accessory protein in conjunction with CAV1 in targeting to lipid rafts and driving caveolae formation. The Ser-36 phosphorylated form has a role in modulating mitosis in endothelial cells. Positive regulator of cellular mitogenesis of the MAPK signaling pathway. Required for the insulin-stimulated nuclear translocation and activation of MAPK1 and STAT3, and the subsequent regulation of cell cycle progression. The sequence is that of Caveolin-2 (Cav2) from Rattus norvegicus (Rat).